A 609-amino-acid chain; its full sequence is Glutamine--fructose-6-phosphate aminotransferase [isomerizing] (609 aa).

Catalysis depends on cysteine 2, which acts as the Nucleophile; for GATase activity. Residues 2-217 (CGIVGAIAGR…DGDTAEIRRD (216 aa)) form the Glutamine amidotransferase type-2 domain. SIS domains follow at residues 285-425 (AESV…LRGA) and 458-599 (WAEC…VDKP). Lysine 604 functions as the For Fru-6P isomerization activity in the catalytic mechanism.

As to quaternary structure, homodimer.

The protein resides in the cytoplasm. The enzyme catalyses D-fructose 6-phosphate + L-glutamine = D-glucosamine 6-phosphate + L-glutamate. Functionally, catalyzes the first step in hexosamine metabolism, converting fructose-6P into glucosamine-6P using glutamine as a nitrogen source. The chain is Glutamine--fructose-6-phosphate aminotransferase [isomerizing] from Xylella fastidiosa (strain Temecula1 / ATCC 700964).